A 338-amino-acid chain; its full sequence is uncharacterized protein (338 aa).

This is an uncharacterized protein from Schizosaccharomyces pombe (strain 972 / ATCC 24843) (Fission yeast).